The chain runs to 374 residues: Pyruvate dehydrogenase E1 component subunit beta-1, mitochondrial (374 aa).

The N-terminal 34 residues, 1–34 (MLGIARRRLGSGCALGQLMQALRPAAAAAAARTY), are a transit peptide targeting the mitochondrion. Residue E97 participates in thiamine diphosphate binding. K(+) contacts are provided by I150, A198, I199, and D201.

In terms of assembly, tetramer of 2 alpha and 2 beta subunits. Thiamine diphosphate serves as cofactor.

It localises to the mitochondrion matrix. The enzyme catalyses N(6)-[(R)-lipoyl]-L-lysyl-[protein] + pyruvate + H(+) = N(6)-[(R)-S(8)-acetyldihydrolipoyl]-L-lysyl-[protein] + CO2. Its function is as follows. The pyruvate dehydrogenase complex catalyzes the overall conversion of pyruvate to acetyl-CoA and CO(2). It contains multiple copies of three enzymatic components: pyruvate dehydrogenase (E1), dihydrolipoamide acetyltransferase (E2) and lipoamide dehydrogenase (E3). This is Pyruvate dehydrogenase E1 component subunit beta-1, mitochondrial from Oryza sativa subsp. japonica (Rice).